A 173-amino-acid chain; its full sequence is Dual-action ribosomal maturation protein DarP (173 aa).

The protein belongs to the DarP family.

The protein localises to the cytoplasm. In terms of biological role, member of a network of 50S ribosomal subunit biogenesis factors which assembles along the 30S-50S interface, preventing incorrect 23S rRNA structures from forming. Promotes peptidyl transferase center (PTC) maturation. The chain is Dual-action ribosomal maturation protein DarP from Pseudomonas putida (strain W619).